The chain runs to 62 residues: Double zinc ribbon protein TK0111 (62 aa).

Residues Cys13, Cys16, Cys31, Cys34, Cys42, Cys45, Cys54, and Cys57 each contribute to the Zn(2+) site.

Crystallized in association with 70S ribosomes. It depends on Zn(2+) as a cofactor.

The protein is Double zinc ribbon protein TK0111 of Thermococcus kodakarensis (strain ATCC BAA-918 / JCM 12380 / KOD1) (Pyrococcus kodakaraensis (strain KOD1)).